Consider the following 321-residue polypeptide: Phospho-N-acetylmuramoyl-pentapeptide-transferase (321 aa).

The next 10 membrane-spanning stretches (helical) occupy residues methionine 1 to isoleucine 21, methionine 50 to valine 70, isoleucine 76 to isoleucine 96, phenylalanine 112 to valine 132, isoleucine 140 to tryptophan 160, glycine 176 to leucine 196, alanine 200 to isoleucine 220, valine 225 to methionine 245, leucine 250 to valine 270, and valine 300 to valine 320.

The protein belongs to the glycosyltransferase 4 family. MraY subfamily. The cofactor is Mg(2+).

It is found in the cell membrane. The enzyme catalyses UDP-N-acetyl-alpha-D-muramoyl-L-alanyl-gamma-D-glutamyl-L-lysyl-D-alanyl-D-alanine + di-trans,octa-cis-undecaprenyl phosphate = Mur2Ac(oyl-L-Ala-gamma-D-Glu-L-Lys-D-Ala-D-Ala)-di-trans,octa-cis-undecaprenyl diphosphate + UMP. Its pathway is cell wall biogenesis; peptidoglycan biosynthesis. Its function is as follows. Catalyzes the initial step of the lipid cycle reactions in the biosynthesis of the cell wall peptidoglycan: transfers peptidoglycan precursor phospho-MurNAc-pentapeptide from UDP-MurNAc-pentapeptide onto the lipid carrier undecaprenyl phosphate, yielding undecaprenyl-pyrophosphoryl-MurNAc-pentapeptide, known as lipid I. The protein is Phospho-N-acetylmuramoyl-pentapeptide-transferase of Staphylococcus aureus (strain MSSA476).